Here is a 330-residue protein sequence, read N- to C-terminus: MIWTGLLVGFLFGIVLQRGRICFNSAFRDVLLFKDNYLFKLAVFTLALEMILFVLLSQVGLMQMNPKPLNLVGNIIGGFVFGLGMVLAGGCASGVTYRVGEGLTTAWFAALFYGLGAYATKSGAFSWWLSWVGQFKSPLSVEESAYYVKGAGPTISSVLGLNPWIPALVIAALFILWAFGTKTTSRETKFNWKIASVCLALVAGLGFITSTLSGRKYGLGITGGWINLFQGFLTNSPLNWEGLEIVGIILGAGVAAAVAGEFKLRMPKNPVTYLQVGIGGLLMGIGAVTAGGCNIGHFLTGVPQLALSSWLASIFFILGNWTMAWILFRR.

Topologically, residues 1-2 are periplasmic; the sequence is MI. Residues 3-18 traverse the membrane as a helical segment; the sequence is WTGLLVGFLFGIVLQR. At 19–36 the chain is on the cytoplasmic side; sequence GRICFNSAFRDVLLFKDN. Residues 37 to 59 form a helical membrane-spanning segment; it reads YLFKLAVFTLALEMILFVLLSQV. Topologically, residues 60-70 are periplasmic; the sequence is GLMQMNPKPLN. Residues 71-87 traverse the membrane as a helical segment; sequence LVGNIIGGFVFGLGMVL. Over 88–102 the chain is Cytoplasmic; the sequence is AGGCASGVTYRVGEG. Residues 103-121 traverse the membrane as a helical segment; sequence LTTAWFAALFYGLGAYATK. Over 122-162 the chain is Periplasmic; it reads SGAFSWWLSWVGQFKSPLSVEESAYYVKGAGPTISSVLGLN. Residues 163-180 form a helical membrane-spanning segment; the sequence is PWIPALVIAALFILWAFG. The Cytoplasmic segment spans residues 181–189; it reads TKTTSRETK. Residues 190-211 traverse the membrane as a helical segment; sequence FNWKIASVCLALVAGLGFITST. The Periplasmic portion of the chain corresponds to 212–239; it reads LSGRKYGLGITGGWINLFQGFLTNSPLN. Residues 240 to 258 form a helical membrane-spanning segment; sequence WEGLEIVGIILGAGVAAAV. Topologically, residues 259-269 are cytoplasmic; sequence AGEFKLRMPKN. Residues 270 to 289 traverse the membrane as a helical segment; it reads PVTYLQVGIGGLLMGIGAVT. Topologically, residues 290 to 306 are periplasmic; it reads AGGCNIGHFLTGVPQLA. A helical transmembrane segment spans residues 307–326; that stretch reads LSSWLASIFFILGNWTMAWI. Topologically, residues 327 to 330 are cytoplasmic; sequence LFRR.

It belongs to the TsuA/YedE (TC 9.B.102) family.

It localises to the cell inner membrane. It catalyses the reaction thiosulfate(in) = thiosulfate(out). Its function is as follows. Mediates thiosulfate uptake. The polypeptide is Thiosulfate transporter TsuA (Spirochaeta thermophila (strain ATCC 700085 / DSM 6578 / Z-1203)).